The sequence spans 1258 residues: Regulator of G-protein signaling 22 (1258 aa).

A disordered region spans residues 581–604 (QQLGRSEPLNAVSSKDGGLEKGSK). 2 consecutive RGS domains span residues 845-973 (TFTD…ASRQ) and 1014-1138 (AFRK…TDEK). The segment at 1145 to 1172 (RRQEHKQKRKASDTEEDKAGKSGVKQYA) is disordered. Residues 1154–1164 (KASDTEEDKAG) are compositionally biased toward basic and acidic residues.

In terms of assembly, interacts with GNA11, GNA12 and GNA13. As to expression, expressed testis, including in Leydig cells and spermatogenic cells from the spermatogonia to spermatid stages (at protein level).

The protein resides in the cytoplasm. It localises to the nucleus. Functionally, inhibits signal transduction by increasing the GTPase activity of G protein alpha subunits thereby driving them into their inactive GDP-bound form. This chain is Regulator of G-protein signaling 22 (Rgs22), found in Mus musculus (Mouse).